A 495-amino-acid chain; its full sequence is UDP-N-acetylmuramoyl-L-alanyl-D-glutamate--2,6-diaminopimelate ligase (495 aa).

Residues Leu-27, Ser-29, and 44 to 46 (HQT) contribute to the UDP-N-acetyl-alpha-D-muramoyl-L-alanyl-D-glutamate site. 116–122 (GTNGKTT) lines the ATP pocket. UDP-N-acetyl-alpha-D-muramoyl-L-alanyl-D-glutamate-binding positions include Asn-157, 158–159 (TT), Ser-185, Gln-191, and Arg-193. Position 225 is an N6-carboxylysine (Lys-225). Meso-2,6-diaminopimelate contacts are provided by residues Arg-390, 414 to 417 (DNPR), Gly-465, and Glu-469. Positions 414-417 (DNPR) match the Meso-diaminopimelate recognition motif motif.

It belongs to the MurCDEF family. MurE subfamily. The cofactor is Mg(2+). Post-translationally, carboxylation is probably crucial for Mg(2+) binding and, consequently, for the gamma-phosphate positioning of ATP.

Its subcellular location is the cytoplasm. The enzyme catalyses UDP-N-acetyl-alpha-D-muramoyl-L-alanyl-D-glutamate + meso-2,6-diaminopimelate + ATP = UDP-N-acetyl-alpha-D-muramoyl-L-alanyl-gamma-D-glutamyl-meso-2,6-diaminopimelate + ADP + phosphate + H(+). It functions in the pathway cell wall biogenesis; peptidoglycan biosynthesis. Its function is as follows. Catalyzes the addition of meso-diaminopimelic acid to the nucleotide precursor UDP-N-acetylmuramoyl-L-alanyl-D-glutamate (UMAG) in the biosynthesis of bacterial cell-wall peptidoglycan. The polypeptide is UDP-N-acetylmuramoyl-L-alanyl-D-glutamate--2,6-diaminopimelate ligase (Photorhabdus laumondii subsp. laumondii (strain DSM 15139 / CIP 105565 / TT01) (Photorhabdus luminescens subsp. laumondii)).